Reading from the N-terminus, the 220-residue chain is Cytidylate kinase (220 aa).

11–19 (GPTASGKGT) lines the ATP pocket.

The protein belongs to the cytidylate kinase family. Type 1 subfamily.

It localises to the cytoplasm. It catalyses the reaction CMP + ATP = CDP + ADP. The catalysed reaction is dCMP + ATP = dCDP + ADP. This is Cytidylate kinase from Polynucleobacter asymbioticus (strain DSM 18221 / CIP 109841 / QLW-P1DMWA-1) (Polynucleobacter necessarius subsp. asymbioticus).